The chain runs to 381 residues: MATVFRPLERLRVPRPSLHPGVTGSGSACCRCTLGAKRYLLTDNIVKLKEFQHKKIAIAYNLPGTKEIYFRNLEEKLTQNKLILKEELKTLLYLCQSLEDVQLAKAVIYRYHAENKNFTLGEYKFGPVFMRLCYELDLEDSAVELVRDKHLQGFFLDSTSFNILMDMLFTKGKYERALQVLIEMKNQDVRFSKETYILAFAICYKLNTLESLKICTTLREEALIKGDIICRRAYCFVVALALNKNQLKNAVSIFSQIVNPESIVCINLNILIHIQSNMLESLLKILEDSLDTNLSKFVRRHTFSEEVLAKVREKLKDSPALIARFDEVYGKLHVNGQITVHSLDALLCHVPRDKRSNLLLLKKRAVSHRTLQPLSRSLLTE.

The stretch at 159-193 (TSFNILMDMLFTKGKYERALQVLIEMKNQDVRFSK) is one PPR repeat. Ser-375 bears the Phosphoserine mark.

The protein belongs to the PTCD2 family. In terms of tissue distribution, high expression in heart and liver and low expression in kidney, brain and testis.

It is found in the mitochondrion. Involved in mitochondrial RNA maturation and mitochondrial respiratory chain function. This chain is Pentatricopeptide repeat-containing protein 2, mitochondrial (Ptcd2), found in Mus musculus (Mouse).